The chain runs to 175 residues: Large ribosomal subunit protein uL10 (175 aa).

Belongs to the universal ribosomal protein uL10 family. In terms of assembly, part of the ribosomal stalk of the 50S ribosomal subunit. The N-terminus interacts with L11 and the large rRNA to form the base of the stalk. The C-terminus forms an elongated spine to which L12 dimers bind in a sequential fashion forming a multimeric L10(L12)X complex.

Its function is as follows. Forms part of the ribosomal stalk, playing a central role in the interaction of the ribosome with GTP-bound translation factors. This Prochlorococcus marinus (strain NATL2A) protein is Large ribosomal subunit protein uL10.